The primary structure comprises 288 residues: Elongation factor Ts (288 aa).

Residues 82 to 85 (TDFV) are involved in Mg(2+) ion dislocation from EF-Tu.

This sequence belongs to the EF-Ts family.

It localises to the cytoplasm. Associates with the EF-Tu.GDP complex and induces the exchange of GDP to GTP. It remains bound to the aminoacyl-tRNA.EF-Tu.GTP complex up to the GTP hydrolysis stage on the ribosome. The protein is Elongation factor Ts of Pelodictyon phaeoclathratiforme (strain DSM 5477 / BU-1).